Consider the following 462-residue polypeptide: Transcription factor-like protein EUC1 (462 aa).

2 disordered regions span residues 11-43 (GFGG…TTSP) and 66-97 (RPTD…GRIK). 2 positions are modified to phosphoserine: Ser17 and Ser23. A compositionally biased stretch (basic and acidic residues) spans 26–35 (DSERRNHDLG). The interval 81-140 (SASATEPTNRIGPGRIKETPETNFNAFLIAQLTRMEEQNANLKEEISLMKKEQELFFLEN) is homodimerization region. Positions 105–135 (NAFLIAQLTRMEEQNANLKEEISLMKKEQEL) form a coiled coil. 2 disordered regions span residues 190–214 (QEAA…STNW) and 226–289 (GDPR…RNRR). The segment covering 197 to 214 (NPSTSTQAHQSQSRSTNW) has biased composition (polar residues). Lys231 is covalently cross-linked (Glycyl lysine isopeptide (Lys-Gly) (interchain with G-Cter in SUMO)). A phosphoserine mark is found at Ser237 and Ser249. Residues 240–251 (ENGEYDGNESDE) are compositionally biased toward acidic residues. Polar residues predominate over residues 252 to 282 (NATTRNLPLNNPDSVSNADDSNNQLDGTGNE). Residue Thr254 is modified to Phosphothreonine. Residues 296 to 385 (YKLNRAIQNV…QAIKVVENIR (90 aa)) are GCR1 DNA-binding region. Polar residues predominate over residues 441–455 (SLQQPHSIPNSSTGT). Residues 441 to 462 (SLQQPHSIPNSSTGTPEHDQDT) form a disordered region.

In terms of assembly, homodimer. Interacts with SLX5. In terms of processing, sumoylated at Lys-231 and subsequently ubiquitinated by the SUMO-targeted ubiquitin ligase (STUbL) complex SLX5/SLX8.

Its subcellular location is the chromosome. Its function is as follows. Transcription factor-like protein that binds to specific DNA motifs called ub-HS-motif associated with several locations where proteins other than histone H2B are ubiquitinated (ub-hotspots). Ubiquitination at these sites depends on the SUMO-targeted ubiquitin ligase (STUbL) complex SLX5/SLX8 and protein turnover on the CDC48 segregase. UBC9, SIZ1, or SIZ2 sumoylate DNA-bound EUC1 to stabilize its DNA-binding. Sumoylated EUC1 acts a cofactor required for the recruitment of the SLX5/SLX8 STUbL complex via specific contacts between EUC1 and SLX5, as well as an additional SUMO-mediated interaction. SLX5/SLX8 then ubiquitinates EUC1 and presumably other targets at ub-hotspots, and the CDC48/UFD1/NPL4 complex, together with UBX4 and UBX5, removes Lys-48-linked ubiquitinated proteins from chromatin. Ubiquitinated proteins could be either degraded by the proteasome or recycled by deubiquitination. EUC1 itself does not seem to underlie extensive turnover, as it is a very stable protein. EUC1 is able to act as a transcription factor, but its function at ub-hotspots does not seem to depend on this ability. EUC1-mediated ub-hotspots are crucial during stress responses when gene expression control is impaired. The sequence is that of Transcription factor-like protein EUC1 from Saccharomyces cerevisiae (strain ATCC 204508 / S288c) (Baker's yeast).